The following is a 504-amino-acid chain: Protein FMP42 (504 aa).

The Vacuolar portion of the chain corresponds to 1 to 11; it reads MTSTRTLRYAQ. The helical transmembrane segment at 12-32 threads the bilayer; it reads VACACIWCLFSAGIIFGFAAL. Residues 33–64 are Cytoplasmic-facing; it reads KPILISEGVYHELCDPKDGDRLLCTAQDLKLN. Residues 65–85 traverse the membrane as a helical segment; sequence FIFALSATVTNIMALPVGKIL. Residues 86–91 lie on the Vacuolar side of the membrane; the sequence is DMYGPR. Residues 92-112 form a helical membrane-spanning segment; it reads VCGIIGSCLLFLASGNFISAK. Topologically, residues 113-119 are cytoplasmic; that stretch reads HLVSLWD. A helical membrane pass occupies residues 120–140; that stretch reads PYLVGYTLLAVAGPFVFISCF. Residues 141–150 lie on the Vacuolar side of the membrane; the sequence is QLANSFPQRS. A helical membrane pass occupies residues 151-171; sequence GTVLALLTGSFDSSSALFLLY. The Cytoplasmic segment spans residues 172–186; sequence RLLYQNWFPTLNVSR. The chain crosses the membrane as a helical span at residues 187–207; sequence FFTLYLIVPVFILACQLTIMP. Residues 208–302 lie on the Vacuolar side of the membrane; sequence HSSYKTVNHI…KSAYEQIKSP (95 aa). Residues Ser-238, Ser-249, and Ser-269 each carry the phosphoserine modification. Residues 303-323 traverse the membrane as a helical segment; it reads WFYLMLLFALVAMLRINYFIA. Topologically, residues 324-344 are cytoplasmic; the sequence is TVRTQEEYLLNDPDLALKLNS. The chain crosses the membrane as a helical span at residues 345–365; the sequence is IFDMLLPLGGAVSIPFIGLLL. Over 366-385 the chain is Vacuolar; sequence DHTDTLSTLTILFTTSTAIG. A helical transmembrane segment spans residues 386–406; sequence VFGLIPNSFTWNLIGIVLLVV. At 407-421 the chain is on the cytoplasmic side; that stretch reads YRPFYYTVVSDYSSK. A helical membrane pass occupies residues 422–442; it reads VFGFDTFGTVYGLLSCICGIF. Residues 443 to 462 are Vacuolar-facing; the sequence is NMSQNLLDKWTHTTFNMNPF. A helical membrane pass occupies residues 463-483; that stretch reads PINLTLVILTVVFSLTLTFYI. At 484–504 the chain is on the cytoplasmic side; it reads RSQILPKPVNERGLSSNYQTI.

It belongs to the SLC43A transporter (TC 2.A.1.44) family.

It is found in the vacuole membrane. This is Protein FMP42 (FMP42) from Saccharomyces cerevisiae (strain ATCC 204508 / S288c) (Baker's yeast).